We begin with the raw amino-acid sequence, 509 residues long: Zinc finger protein Aiolos (509 aa).

The tract at residues 1–85 (MEDIKPNVEL…PMGNAEEPEI (85 aa)) is disordered. Positions 10–20 (LKSTQEQSVPT) are enriched in polar residues. Threonine 20 bears the Phosphothreonine mark. Residues 56–72 (DSMKVKDEYSERDENVL) are compositionally biased toward basic and acidic residues. Residues lysine 61, lysine 73, and lysine 100 each participate in a glycyl lysine isopeptide (Lys-Gly) (interchain with G-Cter in SUMO2) cross-link. 3 consecutive C2H2-type zinc fingers follow at residues 118–140 (MNCDVCGLSCISFNVLMVHKRSH), 146–168 (FQCNQCGASFTQKGNLLRHIKLH), and 174–196 (FKCHLCNYACQRRDALTGHLRTH). Residues 202–224 (YKCEFCGRSYKQRSSLEEHKERC) form a C2H2-type 4; atypical zinc finger. Residue lysine 245 forms a Glycyl lysine isopeptide (Lys-Gly) (interchain with G-Cter in SUMO2) linkage. Phosphothreonine is present on threonine 326. Residues 365–421 (HLPEKSLPSERGLSPTNSGHDSTDTDSNHEERQNHIYQQNPMVPPRARNGMPLLKEG) form a disordered region. At serine 378 the chain carries Phosphoserine. Residues 385–398 (DSTDTDSNHEERQN) show a composition bias toward basic and acidic residues. The C2H2-type 5 zinc-finger motif lies at 452–474 (YRCDHCRVLFLDYVMFTIHMGCH). The interval 452 to 504 (YRCDHCRVLFLDYVMFTIHMGCHGFRDPFECNMCGYRSHDRYEFSSHIARGEH) is mediates homodimerization and heterodimerization. The C2H2-type 6; atypical zinc-finger motif lies at 480–504 (FECNMCGYRSHDRYEFSSHIARGEH).

The protein belongs to the Ikaros C2H2-type zinc-finger protein family. In terms of assembly, homodimer. Heterodimer with other IKAROS family members. Interacts with IKZF4 and IKZF5. Interacts with IKZF1. Interacts with HRAS. Interacts with FOXP3; this interaction may be required for silencing target genes and regulating the suppressive activity of FOXP3-positive regulatory T-cells (Treg). Interacts with BCL21L; this interaction blocks the anti-apoptotic role of BCL21L. Associates with histone deacetylase complexes containing HDAC1, MTA2 and SIN3A.

It is found in the nucleus. Its subcellular location is the cytoplasm. Transcription factor that plays an important role in the regulation of lymphocyte differentiation. Plays an essential role in regulation of B-cell differentiation, proliferation and maturation to an effector state. Involved in regulating BCL2 expression and controlling apoptosis in T-cells in an IL2-dependent manner. This is Zinc finger protein Aiolos (IKZF3) from Bos taurus (Bovine).